The sequence spans 67 residues: Ubiquinol-cytochrome c reductase complex assembly factor 6 (67 aa).

The Mitochondrial matrix segment spans residues 1-8 (MPGGVPWS). The chain crosses the membrane as a helical; Signal-anchor for type II membrane protein span at residues 9-25 (AYLKMLSSSLLAMCAGA). Over 26-67 (QVVHWYYRPDLTIPEIPPKPGELKTELLGLKERRHEPHVSQQ) the chain is Mitochondrial intermembrane.

It belongs to the UQCC6 family. In terms of assembly, interacts with UQCRC1. Interacts with UQCRQ. Interacts with UQCC5. Forms a complex, named COMB/coordinator of mitochondrial CYTB biogenesis, composed of UQCC1, UQCC2, UQCC4, UQCC5 and UQCC6; stabilizes nascent cytochrome b/MT-CYB and promotes its membrane insertion. Forms a complex, named COMA, composed of UQCC1, UQCC2 and UQCC4; activates MT-CYB translation. Forms a complex, named COMC, composed of UQCC1, UQCC2; UQCC3 and UQCC4; mediates MT-CYB hemylation and association with the first nuclear-encoded complex III subunit UQCRQ. Interacts with MT-CYB. Highly expressed in brown adipose, cardiac and skeletal muscle (at protein level).

Its subcellular location is the mitochondrion inner membrane. In terms of biological role, required for the assembly and stability of the mitochondrial ubiquinol-cytochrome c reductase complex (complex III or cytochrome b-c1 complex), a multisubunit transmembrane complex that is part of the mitochondrial electron transport chain (ETC) which drives oxidative phosphorylation. Mediates early complex III biogenesis. Participates in regulating the levels of electron transport chain proteins, and therefore energy supply, in response to changes in energy demand. Also required for cytochrome c oxidase complex (complex IV) assembly. This is Ubiquinol-cytochrome c reductase complex assembly factor 6 from Mus musculus (Mouse).